The primary structure comprises 470 residues: E3 SUMO-protein ligase EGR2 (470 aa).

Residues proline 126–proline 141 show a composition bias toward low complexity. Disordered stretches follow at residues proline 126–threonine 153, proline 159–threonine 178, and proline 185–serine 210. The segment covering serine 190 to tyrosine 202 has biased composition (low complexity). Lysine 247 carries the N6-acetyllysine; by EP300 modification. Residues glycine 275–glycine 291 show a composition bias toward gly residues. The tract at residues glycine 275–aspartate 345 is disordered. 3 C2H2-type zinc fingers span residues tyrosine 337–histidine 361, phenylalanine 367–histidine 389, and phenylalanine 395–histidine 417. The interval aspartate 408–proline 470 is disordered. The segment covering arginine 412–glutamate 422 has biased composition (basic residues). The segment covering serine 426–serine 439 has biased composition (low complexity). A compositionally biased stretch (gly residues) spans glycine 440–leucine 450.

Belongs to the EGR C2H2-type zinc-finger protein family. Interacts with HCFC1. Interacts with WWP2. Interacts with UBC9. Interacts with CITED1. Interacts (via phosphorylated form) with SFN. In terms of processing, ubiquitinated by WWP2 leading to proteasomal degradation. Acetylated at Lys-247. May be deacetylated by HDAC6, HDAC10 or SIRT1. In terms of tissue distribution, expressed mainly in the thymus.

Its subcellular location is the nucleus. It participates in protein modification; protein sumoylation. Its function is as follows. Sequence-specific DNA-binding transcription factor. Plays a role in hindbrain segmentation by regulating the expression of a subset of homeobox containing genes and in Schwann cell myelination by regulating the expression of genes involved in the formation and maintenance of myelin. Binds to two EGR2-consensus sites EGR2A (5'-CTGTAGGAG-3') and EGR2B (5'-ATGTAGGTG-3') in the HOXB3 enhancer and promotes HOXB3 transcriptional activation. Binds to specific DNA sites located in the promoter region of HOXA4, HOXB2 and ERBB2. Regulates hindbrain segmentation by controlling the expression of Hox genes, such as HOXA4, HOXB3 and HOXB2, and thereby specifying odd and even rhombomeres. Promotes the expression of HOXB3 in the rhombomere r5 and of HOXB3 in r3 and r5 in the hindbrain. Regulates myelination in the peripheral nervous system after birth, possibly by regulating the expression of myelin proteins, such as MPZ, and by promoting the differentiation of Schwann cells. Involved in the development of the jaw openener musculature, probably by playing a role in its innervation through trigeminal motor neurons. May play a role in adipogenesis, possibly by regulating the expression of CEBPB. E3 SUMO-protein ligase helping SUMO1 conjugation to its coregulators NAB1 and NAB2, whose sumoylation down-regulates EGR2 transcriptional activity. This chain is E3 SUMO-protein ligase EGR2 (Egr2), found in Mus musculus (Mouse).